A 274-amino-acid chain; its full sequence is Thiazole synthase (274 aa).

Lysine 111 functions as the Schiff-base intermediate with DXP in the catalytic mechanism. 1-deoxy-D-xylulose 5-phosphate-binding positions include glycine 172, 198–199 (AG), and 220–221 (NS). The disordered stretch occupies residues 251 to 274 (RLPERAAASPSSPTTGIIAEAKTK).

It belongs to the ThiG family. Homotetramer. Forms heterodimers with either ThiH or ThiS.

It is found in the cytoplasm. The enzyme catalyses [ThiS sulfur-carrier protein]-C-terminal-Gly-aminoethanethioate + 2-iminoacetate + 1-deoxy-D-xylulose 5-phosphate = [ThiS sulfur-carrier protein]-C-terminal Gly-Gly + 2-[(2R,5Z)-2-carboxy-4-methylthiazol-5(2H)-ylidene]ethyl phosphate + 2 H2O + H(+). The protein operates within cofactor biosynthesis; thiamine diphosphate biosynthesis. Catalyzes the rearrangement of 1-deoxy-D-xylulose 5-phosphate (DXP) to produce the thiazole phosphate moiety of thiamine. Sulfur is provided by the thiocarboxylate moiety of the carrier protein ThiS. In vitro, sulfur can be provided by H(2)S. The polypeptide is Thiazole synthase (Prochlorococcus marinus (strain MIT 9313)).